The following is a 489-amino-acid chain: Ammonium transporter MEP3 (489 aa).

At 1-17 (MARGDGHLWTETYDSST) the chain is on the extracellular side. Residues 18 to 38 (VAFMILGAALVFFMVPGLGFL) form a helical membrane-spanning segment. At 39 to 48 (YSGLARRKSA) the chain is on the cytoplasmic side. Residues 49–69 (LALIWVVIMATLVGILQWYFW) form a helical membrane-spanning segment. The Extracellular portion of the chain corresponds to 70–108 (GYSLAFSKTATNNKFIGNLDSFGFRNVYGKISDDSTYPE). The helical transmembrane segment at 109 to 129 (LIYAIFQMMFMCVALSIIAGA) threads the bilayer. Residues 130-139 (TAERGKLFPH) are Cytoplasmic-facing. The chain crosses the membrane as a helical span at residues 140–160 (MVFLFVFATLVYCPITYWIWA). Residues 161–173 (PGGWAYQWGVLDW) are Extracellular-facing. Residues 174–194 (AGGGNIEILSAVAGFVYSYFL) form a helical membrane-spanning segment. Residues 195–209 (GRRKENLLINFRPHN) are Cytoplasmic-facing. The helical transmembrane segment at 210 to 230 (VSMVTLGTSILWFGWLLFNAA) threads the bilayer. Residues 231 to 239 (SSLSPNMRS) lie on the Extracellular side of the membrane. The helical transmembrane segment at 240–260 (VYAFMNTCLSATTGGMTWCLL) threads the bilayer. Residues 261-267 (DYRSEKK) lie on the Cytoplasmic side of the membrane. Residues 268–288 (WSTVGLCSGIICGLVAATPSS) traverse the membrane as a helical segment. A topological domain (extracellular) is located at residue Gly289. The helical transmembrane segment at 290–310 (CITLYGSLIQGIIAGVVCNFA) threads the bilayer. Topologically, residues 311–330 (TKIKYYLKVDDSLDLLAEHG) are cytoplasmic. A helical transmembrane segment spans residues 331 to 351 (IAGVVGLIFNALFAADWVIGM). The Extracellular portion of the chain corresponds to 352–372 (DGTTKHKGGWLTHNWKQMYIQ). Residues 373-393 (IAYIGASAGYCAVVTAIICFV) form a helical membrane-spanning segment. Residues 394–489 (LGKIPGVHLR…NPKLHHAKEA (96 aa)) are Cytoplasmic-facing. Polar residues predominate over residues 448–481 (GANSASETNPTEDSQNSSLSSATVSGQNEKSNNP). A disordered region spans residues 448 to 489 (GANSASETNPTEDSQNSSLSSATVSGQNEKSNNPKLHHAKEA).

This sequence belongs to the ammonia transporter channel (TC 1.A.11.2) family.

The protein localises to the membrane. In terms of biological role, transporter for ammonium (both charged and uncharged NH3 and NH4) to use as a nitrogen source. The affinity of MEP2 is about twenty times higher than that of MEP1. MEP3 has the lowest affinity. The chain is Ammonium transporter MEP3 (MEP3) from Saccharomyces cerevisiae (strain ATCC 204508 / S288c) (Baker's yeast).